A 465-amino-acid polypeptide reads, in one-letter code: A-type ATP synthase subunit B (465 aa).

Belongs to the ATPase alpha/beta chains family. As to quaternary structure, has multiple subunits with at least A(3), B(3), C, D, E, F, H, I and proteolipid K(x).

It is found in the cell membrane. In terms of biological role, component of the A-type ATP synthase that produces ATP from ADP in the presence of a proton gradient across the membrane. The B chain is a regulatory subunit. This chain is A-type ATP synthase subunit B, found in Sulfurisphaera tokodaii (strain DSM 16993 / JCM 10545 / NBRC 100140 / 7) (Sulfolobus tokodaii).